We begin with the raw amino-acid sequence, 441 residues long: ATP-dependent RNA helicase sub2 (441 aa).

A compositionally biased stretch (low complexity) spans 19–29 (DAAATTAAPAA). The segment at 19–43 (DAAATTAAPAANGAQDKKGDLTVSG) is disordered. The Q motif motif lies at 58–86 (TGFRDFLLKGELLRAITDCGFEHPSEVQQ). The region spanning 89-264 (IPTAILNVDV…KKFMRNPLEV (176 aa)) is the Helicase ATP-binding domain. 102–109 (AKSGLGKT) serves as a coordination point for ATP. The short motif at 211-214 (DECD) is the DEAD box element. Residues 276 to 437 (GLQQYYIKLS…EYPEGGVDSS (162 aa)) form the Helicase C-terminal domain.

Belongs to the DEAD box helicase family. DECD subfamily.

It localises to the nucleus. The enzyme catalyses ATP + H2O = ADP + phosphate + H(+). Its function is as follows. ATP-binding RNA helicase involved in transcription elongation and required for the export of mRNA out of the nucleus. SUB2 also plays a role in pre-mRNA splicing and spliceosome assembly. May be involved in rDNA and telomeric silencing, and maintenance of genome integrity. The chain is ATP-dependent RNA helicase sub2 (sub2) from Neosartorya fischeri (strain ATCC 1020 / DSM 3700 / CBS 544.65 / FGSC A1164 / JCM 1740 / NRRL 181 / WB 181) (Aspergillus fischerianus).